The following is a 263-amino-acid chain: Purine nucleoside phosphorylase SAV1187 (263 aa).

Zn(2+)-binding residues include histidine 79, cysteine 124, and histidine 141.

Belongs to the purine nucleoside phosphorylase YfiH/LACC1 family. In terms of assembly, homodimer. The cofactor is Cu(2+). Zn(2+) serves as cofactor.

It catalyses the reaction adenosine + phosphate = alpha-D-ribose 1-phosphate + adenine. It carries out the reaction S-methyl-5'-thioadenosine + phosphate = 5-(methylsulfanyl)-alpha-D-ribose 1-phosphate + adenine. The catalysed reaction is inosine + phosphate = alpha-D-ribose 1-phosphate + hypoxanthine. The enzyme catalyses adenosine + H2O + H(+) = inosine + NH4(+). Purine nucleoside enzyme that catalyzes the phosphorolysis of adenosine and inosine nucleosides, yielding D-ribose 1-phosphate and the respective free bases, adenine and hypoxanthine. Also catalyzes the phosphorolysis of S-methyl-5'-thioadenosine into adenine and S-methyl-5-thio-alpha-D-ribose 1-phosphate. Also has adenosine deaminase activity. The sequence is that of Purine nucleoside phosphorylase SAV1187 from Staphylococcus aureus (strain Mu50 / ATCC 700699).